A 523-amino-acid chain; its full sequence is Bifunctional purine biosynthesis protein PurH (523 aa).

Residues 4–152 form the MGS-like domain; sequence DHIRRPIRRA…KNHPSVAVVT (149 aa).

This sequence belongs to the PurH family.

It catalyses the reaction (6R)-10-formyltetrahydrofolate + 5-amino-1-(5-phospho-beta-D-ribosyl)imidazole-4-carboxamide = 5-formamido-1-(5-phospho-D-ribosyl)imidazole-4-carboxamide + (6S)-5,6,7,8-tetrahydrofolate. The catalysed reaction is IMP + H2O = 5-formamido-1-(5-phospho-D-ribosyl)imidazole-4-carboxamide. It functions in the pathway purine metabolism; IMP biosynthesis via de novo pathway; 5-formamido-1-(5-phospho-D-ribosyl)imidazole-4-carboxamide from 5-amino-1-(5-phospho-D-ribosyl)imidazole-4-carboxamide (10-formyl THF route): step 1/1. The protein operates within purine metabolism; IMP biosynthesis via de novo pathway; IMP from 5-formamido-1-(5-phospho-D-ribosyl)imidazole-4-carboxamide: step 1/1. The sequence is that of Bifunctional purine biosynthesis protein PurH from Mycobacterium marinum (strain ATCC BAA-535 / M).